The sequence spans 476 residues: Cardiolipin synthase (476 aa).

2 helical membrane passes run 2 to 22 (HLFI…IIFI) and 31 to 51 (WAWI…YILF). PLD phosphodiesterase domains lie at 207 to 234 (INYR…GDEY) and 389 to 416 (EKGF…DIRS). Active-site residues include histidine 212, lysine 214, aspartate 219, histidine 394, lysine 396, and aspartate 401.

It belongs to the phospholipase D family. Cardiolipin synthase subfamily.

The protein localises to the cell membrane. It catalyses the reaction 2 a 1,2-diacyl-sn-glycero-3-phospho-(1'-sn-glycerol) = a cardiolipin + glycerol. Its function is as follows. Catalyzes the reversible phosphatidyl group transfer from one phosphatidylglycerol molecule to another to form cardiolipin (CL) (diphosphatidylglycerol) and glycerol. The chain is Cardiolipin synthase (cls) from Clostridium perfringens (strain ATCC 13124 / DSM 756 / JCM 1290 / NCIMB 6125 / NCTC 8237 / Type A).